Here is a 675-residue protein sequence, read N- to C-terminus: INO80 complex subunit D (675 aa).

Disordered regions lie at residues Met-1–Gln-39, Thr-183–Pro-203, Leu-274–Val-324, Asp-473–Lys-523, and Val-627–Ser-675. Low complexity-rich tracts occupy residues Gln-282–Ile-318, Asn-482–Asn-519, and Asn-634–Ser-648. The segment covering Glu-664–Ser-675 has biased composition (basic and acidic residues).

This sequence belongs to the INO80D family. Component of the chromatin-remodeling INO80 complex.

The protein localises to the nucleus. Its function is as follows. Putative regulatory component of the chromatin remodeling INO80 complex which is involved in transcriptional regulation, DNA replication and probably DNA repair. This is INO80 complex subunit D from Dictyostelium discoideum (Social amoeba).